The chain runs to 72 residues: uncharacterized protein (72 aa).

Positions 52–72 are disordered; the sequence is KGGRQRDEAVGVEELCKQHKE. A compositionally biased stretch (basic and acidic residues) spans 55-72; that stretch reads RQRDEAVGVEELCKQHKE.

This sequence belongs to the YiiE family.

This is an uncharacterized protein from Escherichia coli O6:H1 (strain CFT073 / ATCC 700928 / UPEC).